Reading from the N-terminus, the 92-residue chain is Small ribosomal subunit protein uS19c (92 aa).

It belongs to the universal ribosomal protein uS19 family.

The protein resides in the plastid. The protein localises to the chloroplast. Functionally, protein S19 forms a complex with S13 that binds strongly to the 16S ribosomal RNA. This chain is Small ribosomal subunit protein uS19c, found in Ceratophyllum demersum (Rigid hornwort).